The chain runs to 600 residues: Proline--tRNA ligase (600 aa).

It belongs to the class-II aminoacyl-tRNA synthetase family. ProS type 1 subfamily. In terms of assembly, homodimer.

It localises to the cytoplasm. The catalysed reaction is tRNA(Pro) + L-proline + ATP = L-prolyl-tRNA(Pro) + AMP + diphosphate. Catalyzes the attachment of proline to tRNA(Pro) in a two-step reaction: proline is first activated by ATP to form Pro-AMP and then transferred to the acceptor end of tRNA(Pro). As ProRS can inadvertently accommodate and process non-cognate amino acids such as alanine and cysteine, to avoid such errors it has two additional distinct editing activities against alanine. One activity is designated as 'pretransfer' editing and involves the tRNA(Pro)-independent hydrolysis of activated Ala-AMP. The other activity is designated 'posttransfer' editing and involves deacylation of mischarged Ala-tRNA(Pro). The misacylated Cys-tRNA(Pro) is not edited by ProRS. The sequence is that of Proline--tRNA ligase from Synechococcus sp. (strain ATCC 27144 / PCC 6301 / SAUG 1402/1) (Anacystis nidulans).